The primary structure comprises 732 residues: 1,4-alpha-glucan branching enzyme GlgB 2 (732 aa).

Catalysis depends on aspartate 413, which acts as the Nucleophile. Glutamate 466 serves as the catalytic Proton donor.

This sequence belongs to the glycosyl hydrolase 13 family. GlgB subfamily. As to quaternary structure, monomer.

It catalyses the reaction Transfers a segment of a (1-&gt;4)-alpha-D-glucan chain to a primary hydroxy group in a similar glucan chain.. Its pathway is glycan biosynthesis; glycogen biosynthesis. Its function is as follows. Catalyzes the formation of the alpha-1,6-glucosidic linkages in glycogen by scission of a 1,4-alpha-linked oligosaccharide from growing alpha-1,4-glucan chains and the subsequent attachment of the oligosaccharide to the alpha-1,6 position. This Rhizobium etli (strain ATCC 51251 / DSM 11541 / JCM 21823 / NBRC 15573 / CFN 42) protein is 1,4-alpha-glucan branching enzyme GlgB 2.